A 1403-amino-acid chain; its full sequence is Mannuronan C5-epimerase AlgE1 (1403 aa).

PbH1 repeat units lie at residues 133-155 (DRDV…DPHE), 157-179 (TINL…VADY), 180-202 (QVGG…NIVT), 204-226 (TNDF…VVQR), 257-279 (AHDV…RVYG), 280-302 (AQDV…YAEV), and 320-359 (TTGT…SIDG). Disordered stretches follow at residues 372-395 (STVS…NDAL) and 408-428 (AGDD…GAGR). 8 Hemolysin-type calcium-binding repeats span residues 388–403 (GSAG…AHET), 406–422 (GQAG…NDIL), 424–440 (GGAG…ADTF), 557–573 (GYGG…DDIL), 574–591 (VGGA…ADVF), 697–712 (EGTD…EANE), 716–732 (GLDG…DDIL), and 734–750 (GGAG…ADTF). PbH1 repeat units lie at residues 977 to 999 (DRNV…DPHE), 1001 to 1023 (TINL…VADY), 1024 to 1046 (LVDS…NIVT), 1048 to 1070 (TYDF…TIQR), 1101 to 1123 (TNNV…RLYG), 1124 to 1146 (TEDV…YPEV), 1163 to 1185 (TLNT…AVRE), and 1190 to 1212 (SDYT…QLSG). Hemolysin-type calcium-binding repeat units follow at residues 1227 to 1243 (GTDG…NDQL), 1244 to 1261 (YGGA…DDLL), and 1263 to 1279 (GGAG…ADTF).

It belongs to the D-mannuronate C5-epimerase family. Requires Ca(2+) as cofactor.

The protein resides in the secreted. It carries out the reaction [(1-&gt;4)-beta-D-mannuronosyl](n) = [alginate](n). The protein operates within glycan biosynthesis; alginate biosynthesis. With respect to regulation, inhibited by zinc. Functionally, converts beta-D-mannuronic acid (M) to alpha-L-guluronic acid (G), producing a polymer with gel-forming capacity, required for the formation of the cyst coat. In Azotobacter vinelandii, this protein is Mannuronan C5-epimerase AlgE1.